Reading from the N-terminus, the 167-residue chain is UPF0598 protein CG30010 (167 aa).

The protein belongs to the UPF0598 family.

The polypeptide is UPF0598 protein CG30010 (Drosophila melanogaster (Fruit fly)).